A 303-amino-acid polypeptide reads, in one-letter code: Probable 5-dehydro-4-deoxyglucarate dehydratase (303 aa).

This sequence belongs to the DapA family.

It carries out the reaction 5-dehydro-4-deoxy-D-glucarate + H(+) = 2,5-dioxopentanoate + CO2 + H2O. Its pathway is carbohydrate acid metabolism; D-glucarate degradation; 2,5-dioxopentanoate from D-glucarate: step 2/2. In Azotobacter vinelandii (strain DJ / ATCC BAA-1303), this protein is Probable 5-dehydro-4-deoxyglucarate dehydratase.